Reading from the N-terminus, the 397-residue chain is Acetate kinase (397 aa).

Position 8 (Asn8) interacts with Mg(2+). ATP is bound at residue Lys15. Arg89 serves as a coordination point for substrate. The active-site Proton donor/acceptor is the Asp146. ATP-binding positions include 206–210 (HLGNG), 281–283 (DLR), and 329–333 (GVGEN). Glu382 contacts Mg(2+).

Belongs to the acetokinase family. Homodimer. It depends on Mg(2+) as a cofactor. Mn(2+) serves as cofactor.

Its subcellular location is the cytoplasm. The enzyme catalyses acetate + ATP = acetyl phosphate + ADP. It participates in metabolic intermediate biosynthesis; acetyl-CoA biosynthesis; acetyl-CoA from acetate: step 1/2. Functionally, catalyzes the formation of acetyl phosphate from acetate and ATP. Can also catalyze the reverse reaction. This chain is Acetate kinase, found in Bacillus mycoides (strain KBAB4) (Bacillus weihenstephanensis).